We begin with the raw amino-acid sequence, 640 residues long: RNA polymerase II elongation factor ELL2 (640 aa).

Disordered stretches follow at residues Ala172 to Ser202, Lys290 to Arg320, and Arg343 to Leu490. Polar residues-rich tracts occupy residues Thr184–Ser202 and Leu291–Gln318. A compositionally biased stretch (low complexity) spans Ala360 to Ile372. Residues Ile391–Thr401 show a composition bias toward polar residues. The span at Met457–Lys470 shows a compositional bias: basic residues. The span at Glu471–Leu490 shows a compositional bias: basic and acidic residues. Phosphoserine occurs at positions 503 and 580. One can recognise an OCEL domain in the interval Pro526–Ala636.

This sequence belongs to the ELL/occludin family. In terms of assembly, component of the super elongation complex (SEC), at least composed of EAF1, EAF2, CDK9, MLLT3/AF9, AFF (AFF1 or AFF4), the P-TEFb complex and ELL (ELL, ELL2 or ELL3). Component of the little elongation complex (LEC), at least composed of ELL (ELL, ELL2 or ELL3), ZC3H8, ICE1 and ICE2. Interacts with AFF4; the interaction is direct and leads to stabilize ELL2 and prevent ELL2 ubiquitination. Interacts with EAF1 and EAF2. In terms of processing, ubiquitinated by SIAH1, leading to its degradation by the proteasome. Interaction with AFF4 stabilizes ELL2 and prevents ELL2 ubiquitination.

Its subcellular location is the nucleus. In terms of biological role, elongation factor component of the super elongation complex (SEC), a complex required to increase the catalytic rate of RNA polymerase II transcription by suppressing transient pausing by the polymerase at multiple sites along the DNA. Component of the little elongation complex (LEC), a complex required to regulate small nuclear RNA (snRNA) gene transcription by RNA polymerase II and III. Plays a role in immunoglobulin secretion in plasma cells: directs efficient alternative mRNA processing, influencing both proximal poly(A) site choice and exon skipping, as well as immunoglobulin heavy chain (IgH) alternative processing. Probably acts by regulating histone modifications accompanying transition from membrane-specific to secretory IgH mRNA expression. This is RNA polymerase II elongation factor ELL2 (ELL2) from Homo sapiens (Human).